Here is a 348-residue protein sequence, read N- to C-terminus: Protein RecA (348 aa).

Residue 67-74 coordinates ATP; the sequence is GPESSGKT.

The protein belongs to the RecA family.

It is found in the cytoplasm. Its function is as follows. Can catalyze the hydrolysis of ATP in the presence of single-stranded DNA, the ATP-dependent uptake of single-stranded DNA by duplex DNA, and the ATP-dependent hybridization of homologous single-stranded DNAs. It interacts with LexA causing its activation and leading to its autocatalytic cleavage. In Salinispora arenicola (strain CNS-205), this protein is Protein RecA.